The chain runs to 527 residues: Glucose-6-phosphate isomerase (527 aa).

Glutamate 323 serves as the catalytic Proton donor. Catalysis depends on residues histidine 352 and lysine 454.

It belongs to the GPI family.

It is found in the cytoplasm. The enzyme catalyses alpha-D-glucose 6-phosphate = beta-D-fructose 6-phosphate. It functions in the pathway carbohydrate biosynthesis; gluconeogenesis. Its pathway is carbohydrate degradation; glycolysis; D-glyceraldehyde 3-phosphate and glycerone phosphate from D-glucose: step 2/4. Catalyzes the reversible isomerization of glucose-6-phosphate to fructose-6-phosphate. The polypeptide is Glucose-6-phosphate isomerase (Prochlorococcus marinus (strain MIT 9515)).